A 394-amino-acid chain; its full sequence is L-lactate dehydrogenase (394 aa).

The FMN hydroxy acid dehydrogenase domain occupies 1–380 (MIISAASDYR…SRDSLVQNAE (380 aa)). Tyr24 provides a ligand contact to substrate. Residues Ser106 and Gln127 each contribute to the FMN site. Tyr129 lines the substrate pocket. Thr155 lines the FMN pocket. Substrate is bound at residue Arg164. Lys251 contacts FMN. His275 (proton acceptor) is an active-site residue. Residue Arg278 participates in substrate binding. An FMN-binding site is contributed by 306–330 (DSGIRNGLDVVRMIALGADSVLLGR).

The protein belongs to the FMN-dependent alpha-hydroxy acid dehydrogenase family. FMN is required as a cofactor.

Its subcellular location is the cell inner membrane. The enzyme catalyses (S)-lactate + A = pyruvate + AH2. In terms of biological role, catalyzes the conversion of L-lactate to pyruvate. Is coupled to the respiratory chain. This Klebsiella pneumoniae (strain 342) protein is L-lactate dehydrogenase.